Reading from the N-terminus, the 108-residue chain is Nucleoid-associated protein Bcen_6253 (108 aa).

The segment covering 85–95 has biased composition (polar residues); sequence ATSQEKMSGMT. The disordered stretch occupies residues 85–108; sequence ATSQEKMSGMTSGLPLPPGFKLPF. Over residues 99 to 108 the composition is skewed to pro residues; the sequence is PLPPGFKLPF.

The protein belongs to the YbaB/EbfC family. Homodimer.

Its subcellular location is the cytoplasm. The protein resides in the nucleoid. Binds to DNA and alters its conformation. May be involved in regulation of gene expression, nucleoid organization and DNA protection. This chain is Nucleoid-associated protein Bcen_6253, found in Burkholderia orbicola (strain AU 1054).